We begin with the raw amino-acid sequence, 118 residues long: Small ribosomal subunit protein uS13 (118 aa).

The interval 94 to 118 is disordered; the sequence is SLPVRGQRTKTNARTRKGPRKAIKK.

This sequence belongs to the universal ribosomal protein uS13 family. Part of the 30S ribosomal subunit. Forms a loose heterodimer with protein S19. Forms two bridges to the 50S subunit in the 70S ribosome.

Its function is as follows. Located at the top of the head of the 30S subunit, it contacts several helices of the 16S rRNA. In the 70S ribosome it contacts the 23S rRNA (bridge B1a) and protein L5 of the 50S subunit (bridge B1b), connecting the 2 subunits; these bridges are implicated in subunit movement. Contacts the tRNAs in the A and P-sites. This is Small ribosomal subunit protein uS13 from Aeromonas hydrophila subsp. hydrophila (strain ATCC 7966 / DSM 30187 / BCRC 13018 / CCUG 14551 / JCM 1027 / KCTC 2358 / NCIMB 9240 / NCTC 8049).